The following is a 147-amino-acid chain: Globin, major monomeric component (147 aa).

Residues Gly1 to Gln146 enclose the Globin domain. His90 provides a ligand contact to heme b.

This sequence belongs to the globin family. As to quaternary structure, monomer.

This is Globin, major monomeric component from Glycera dibranchiata (Bloodworm).